The primary structure comprises 546 residues: Chaperonin GroEL (546 aa).

ATP is bound by residues 29–32 (TMGP), K50, 86–90 (DGTTT), G414, and D492.

Belongs to the chaperonin (HSP60) family. Forms a cylinder of 14 subunits composed of two heptameric rings stacked back-to-back. Interacts with the co-chaperonin GroES.

It is found in the cytoplasm. It catalyses the reaction ATP + H2O + a folded polypeptide = ADP + phosphate + an unfolded polypeptide.. Its function is as follows. Together with its co-chaperonin GroES, plays an essential role in assisting protein folding. The GroEL-GroES system forms a nano-cage that allows encapsulation of the non-native substrate proteins and provides a physical environment optimized to promote and accelerate protein folding. In Helicobacter pylori (strain HPAG1), this protein is Chaperonin GroEL.